We begin with the raw amino-acid sequence, 596 residues long: Cell adhesion molecule CEACAM20 (596 aa).

The first 30 residues, 1-30 (MGPADSWGHHWMGILLSASLCTVWSPPAAA), serve as a signal peptide directing secretion. Topologically, residues 31–450 (QLTLNANPLD…SSLSSGAIAG (420 aa)) are extracellular. Ig-like C2-type domains follow at residues 58–154 (PQIH…PIFL), 160–246 (PDPV…GTLK), 256–341 (PQVV…LELT), and 346–432 (PDQV…TSVL). A disulfide bond links Cys90 and Cys138. N-linked (GlcNAc...) asparagine glycosylation is found at Asn96 and Asn105. Cys276 and Cys324 are oxidised to a cystine. Residues Asn280, Asn306, Asn317, Asn368, and Asn415 are each glycosylated (N-linked (GlcNAc...) asparagine). Cys375 and Cys416 are joined by a disulfide. A helical transmembrane segment spans residues 451 to 471 (IVIGILAVIAVASELGYFLCI). Residues 472 to 585 (RNARRPSRKT…SIYEELVNPE (114 aa)) lie on the Cytoplasmic side of the membrane. Disordered regions lie at residues 477–510 (PSRK…LSPE) and 527–563 (QPPD…LMPP). Low complexity predominate over residues 501–510 (EPSSESLSPE). Residues 553 to 562 (WKPPPKPLMP) are compositionally biased toward pro residues. Phosphotyrosine occurs at positions 578 and 589.

Belongs to the immunoglobulin superfamily. CEA family. Interacts (via extracellular domain) with PTPRH (via extracellular domain); the interaction dephosphorylates CEACAM20. Interacts (phosphorylated form) with SYK (via SH2 domains); the interaction further enhances CEACAM20 phosphorylation. In terms of processing, phosphorylated on tyrosine residues by SYK, SRC and FYN in vitro.

The protein localises to the cell projection. It is found in the microvillus membrane. Its subcellular location is the apical cell membrane. Together with the tyrosine-protein kinase SYK, enhances production of the cytokine CXCL8/IL-8 via the NFKB pathway and may thus have a role in the intestinal immune response. The sequence is that of Cell adhesion molecule CEACAM20 from Homo sapiens (Human).